The chain runs to 368 residues: MHTMNGDNFANSFPKNPLLSRNSSSSNVIQYSDEFSPDEDWLNEHAAKEHEERIRRPSVNRAWQKNSTSGGPSVSLEKREADVASLGEVMDLEEVPRGITRQARQLNEYIFPKHRFRNHLVDEGKIPLVLVACGSFSPITYLHLRMFEMATDTIQEQTNMELVAGYFSPVNDHYKKEGLAPAYHRVRMCELACERTSSWLMVDAWESLQPSYTCTARVLDHFDEEINQKRGGITLSDGTKRPCKIMLLAGGDLIASMGEPGVWSDKDLHHILGKFGCCIVERTGSDVWAFLLAHDIMFAYRGNILVIKQLIYNDISSTKVRLFIRRGMSIRYLLPNSVIQYIERYALYRDAEPVKTIFYQSPFVRMEP.

The span at 1-14 (MHTMNGDNFANSFP) shows a compositional bias: polar residues. Positions 1–25 (MHTMNGDNFANSFPKNPLLSRNSSS) are disordered. Serine 36 is subject to Phosphoserine. Residues 47 to 78 (AKEHEERIRRPSVNRAWQKNSTSGGPSVSLEK) are disordered. The span at 61 to 72 (RAWQKNSTSGGP) shows a compositional bias: polar residues. Phosphoserine occurs at positions 75 and 85. Serine 135 and phenylalanine 136 together coordinate NAD(+). Histidine 143 is a binding site for ATP. Residues threonine 215, glycine 250, aspartate 252, tryptophan 263, arginine 282, and asparagine 313 each coordinate NAD(+). Position 318–321 (318–321 (TKVR)) interacts with ATP.

It belongs to the eukaryotic NMN adenylyltransferase family. Requires a divalent metal cation as cofactor.

It is found in the cytoplasm. It localises to the nucleus. It carries out the reaction beta-nicotinamide D-ribonucleotide + ATP + H(+) = diphosphate + NAD(+). The catalysed reaction is nicotinate beta-D-ribonucleotide + ATP + H(+) = deamido-NAD(+) + diphosphate. Its pathway is cofactor biosynthesis; NAD(+) biosynthesis; deamido-NAD(+) from nicotinate D-ribonucleotide: step 1/1. It participates in cofactor biosynthesis; NAD(+) biosynthesis; NAD(+) from nicotinamide D-ribonucleotide: step 1/1. In terms of biological role, catalyzes the formation of NAD(+) from nicotinamide mononucleotide (NMN) and ATP. Can also use the deamidated form; nicotinic acid mononucleotide (NaMN) as substrate to form deamido-NAD(+) (NaAD). Key enzyme in both de novo and salvage pathways for NAD(+) biosynthesis. This Schizosaccharomyces pombe (strain 972 / ATCC 24843) (Fission yeast) protein is Nicotinamide/nicotinic acid mononucleotide adenylyltransferase.